The sequence spans 287 residues: ATP synthase gamma chain (287 aa).

Belongs to the ATPase gamma chain family. In terms of assembly, F-type ATPases have 2 components, CF(1) - the catalytic core - and CF(0) - the membrane proton channel. CF(1) has five subunits: alpha(3), beta(3), gamma(1), delta(1), epsilon(1). CF(0) has three main subunits: a, b and c.

The protein localises to the cell inner membrane. Its function is as follows. Produces ATP from ADP in the presence of a proton gradient across the membrane. The gamma chain is believed to be important in regulating ATPase activity and the flow of protons through the CF(0) complex. The polypeptide is ATP synthase gamma chain (Escherichia coli (strain 55989 / EAEC)).